The primary structure comprises 211 residues: Ion-translocating oxidoreductase complex subunit G (211 aa).

The helical transmembrane segment at 9 to 29 (GLTLAIFACATTGLVALTQYL) threads the bilayer. Thr175 carries the post-translational modification FMN phosphoryl threonine.

This sequence belongs to the RnfG family. In terms of assembly, the complex is composed of six subunits: RnfA, RnfB, RnfC, RnfD, RnfE and RnfG. It depends on FMN as a cofactor.

It localises to the cell inner membrane. In terms of biological role, part of a membrane-bound complex that couples electron transfer with translocation of ions across the membrane. This is Ion-translocating oxidoreductase complex subunit G from Vibrio parahaemolyticus serotype O3:K6 (strain RIMD 2210633).